A 376-amino-acid polypeptide reads, in one-letter code: Putative glutamate--cysteine ligase 2-1 (376 aa).

The protein belongs to the glutamate--cysteine ligase type 2 family. YbdK subfamily.

The enzyme catalyses L-cysteine + L-glutamate + ATP = gamma-L-glutamyl-L-cysteine + ADP + phosphate + H(+). Its function is as follows. ATP-dependent carboxylate-amine ligase which exhibits weak glutamate--cysteine ligase activity. The polypeptide is Putative glutamate--cysteine ligase 2-1 (Mycobacterium sp. (strain KMS)).